A 65-amino-acid polypeptide reads, in one-letter code: MNVNDLRNKTKAELKKELLELLKEQFNLRMQKGGGEAPRPHLFKRVRRDIARVKTLLGEKERNNE.

This sequence belongs to the universal ribosomal protein uL29 family.

This chain is Large ribosomal subunit protein uL29, found in Coxiella burnetii (strain CbuK_Q154) (Coxiella burnetii (strain Q154)).